We begin with the raw amino-acid sequence, 340 residues long: MPIFPKPKVTVILANLGTPDVPTASAVRAFLKQFLSDQRVIEIPKLLWKIILYSFVLPFRPKRVAHAYASVWGQDSPMREILFAQTDALKRQLISHYPQLDLNIVPAMTYGNPGVQHILKDLAASPQEHVILLPLFPQYSATSTAPLYDAFANWIPKQRHLPGLTIIKDYYRHPVFIQALVSSVQRFQQQHGKPQKLLMSFHGIPQPYADKGDPYADRCRETARLVAKQLGLTPDDWAISFQSRFGKQEWVKPYTDELLTTWAANGIKSVQILSPAFSADCLETLEELEIQNAELFLEAGGTSYQYIPALNTSVEHLELLRQLLQAHLDALNYSLAYSAH.

Positions 202 and 283 each coordinate Fe cation.

It belongs to the ferrochelatase family.

The protein resides in the cytoplasm. The enzyme catalyses heme b + 2 H(+) = protoporphyrin IX + Fe(2+). Its pathway is porphyrin-containing compound metabolism; protoheme biosynthesis; protoheme from protoporphyrin-IX: step 1/1. In terms of biological role, catalyzes the ferrous insertion into protoporphyrin IX. The polypeptide is Ferrochelatase (Acinetobacter baylyi (strain ATCC 33305 / BD413 / ADP1)).